We begin with the raw amino-acid sequence, 202 residues long: Matrix protein (202 aa).

The short motif at 35-38 (PPEY) is the PPXY motif element. Residues 115 to 151 (KLRRTLIFQWADSRGPLEGEELEYSQEITWDDDTEFV) form an essential for glycoprotein binding region.

It belongs to the lyssavirus matrix protein family. In terms of assembly, homomultimer. Interacts with nucleoprotein and with the cytoplasmic domain of glycoprotein. Interacts with host ATP6V1A; this interaction plays an important role in virion uncoating after viral entry.

The protein resides in the virion membrane. The protein localises to the host endomembrane system. Its subcellular location is the host cytoplasm. Plays a major role in assembly, budding and uncoating of virion after membrane fusion. Completely covers the ribonucleoprotein coil and keep it in condensed bullet-shaped form. Inhibits viral transcription and stimulates replication. Plays a major role in early induction of TRAIL-mediated apoptosis in infected neurons. Inhibits the integrated stress response (ISR) in the infected cell by blocking the formation of stress granules. The chain is Matrix protein (M) from Rabies virus (strain CVS-11) (RABV).